The following is a 648-amino-acid chain: Threonine--tRNA ligase (648 aa).

In terms of domain architecture, TGS spans 1–63 (MAQISLTFPD…HADATIAIHT (63 aa)). Residues 247-544 (DHRKLGREMD…LIENSAGKLP (298 aa)) form a catalytic region. The Zn(2+) site is built by cysteine 344, histidine 395, and histidine 521.

The protein belongs to the class-II aminoacyl-tRNA synthetase family. As to quaternary structure, homodimer. The cofactor is Zn(2+).

The protein resides in the cytoplasm. The enzyme catalyses tRNA(Thr) + L-threonine + ATP = L-threonyl-tRNA(Thr) + AMP + diphosphate + H(+). Its function is as follows. Catalyzes the attachment of threonine to tRNA(Thr) in a two-step reaction: L-threonine is first activated by ATP to form Thr-AMP and then transferred to the acceptor end of tRNA(Thr). Also edits incorrectly charged L-seryl-tRNA(Thr). This chain is Threonine--tRNA ligase, found in Roseobacter denitrificans (strain ATCC 33942 / OCh 114) (Erythrobacter sp. (strain OCh 114)).